The following is a 224-amino-acid chain: Beta-casein (224 aa).

An N-terminal signal peptide occupies residues 1–15 (MKVLILACLVALALA). Ser-30, Ser-32, Ser-33, and Ser-34 each carry phosphoserine.

The protein belongs to the beta-casein family. In terms of tissue distribution, mammary gland specific. Secreted in milk.

The protein resides in the secreted. In terms of biological role, important role in determination of the surface properties of the casein micelles. This Bubalus bubalis (Domestic water buffalo) protein is Beta-casein (CSN2).